The chain runs to 122 residues: Large ribosomal subunit protein bL12 (122 aa).

The protein belongs to the bacterial ribosomal protein bL12 family. As to quaternary structure, homodimer. Part of the ribosomal stalk of the 50S ribosomal subunit. Forms a multimeric L10(L12)X complex, where L10 forms an elongated spine to which 2 to 4 L12 dimers bind in a sequential fashion. Binds GTP-bound translation factors.

Forms part of the ribosomal stalk which helps the ribosome interact with GTP-bound translation factors. Is thus essential for accurate translation. The sequence is that of Large ribosomal subunit protein bL12 from Yersinia pseudotuberculosis serotype O:1b (strain IP 31758).